Here is a 433-residue protein sequence, read N- to C-terminus: N-lysine methyltransferase SMYD2 (433 aa).

An SET domain is found at 7-241 (GGLERFCSPG…PGEEVFTSYI (235 aa)). Residue 17 to 19 (KGR) participates in S-adenosyl-L-methionine binding. Positions 52, 55, 65, 68, 74, 78, 86, and 90 each coordinate Zn(2+). The segment at 52-90 (CEYCFTRKEGLSKCGRCKQAFYCNVECQKEDWPMHKLEC) adopts an MYND-type zinc-finger fold. Residues histidine 137, 206–207 (NH), and 258–260 (YFF) each bind S-adenosyl-L-methionine. The residue at position 283 (serine 283) is a Phosphoserine.

The protein belongs to the class V-like SAM-binding methyltransferase superfamily. As to quaternary structure, interacts with RNA polymerase II and HELZ. Interacts with SIN3A and HDAC1. Interacts (via MYND-type zinc finger) with EPB41L3. Interacts (via SET domain) with p53/TP53. Interacts with RB1 and HSP90AA1.

Its subcellular location is the cytoplasm. It is found in the cytosol. It localises to the nucleus. The enzyme catalyses L-lysyl(4)-[histone H3] + 3 S-adenosyl-L-methionine = N(6),N(6),N(6)-trimethyl-L-lysyl(4)-[histone H3] + 3 S-adenosyl-L-homocysteine + 3 H(+). It carries out the reaction L-lysyl-[protein] + S-adenosyl-L-methionine = N(6)-methyl-L-lysyl-[protein] + S-adenosyl-L-homocysteine + H(+). Protein-lysine N-methyltransferase that methylates both histones and non-histone proteins, including p53/TP53 and RB1. Specifically trimethylates histone H3 'Lys-4' (H3K4me3) in vivo. The activity requires interaction with HSP90alpha. Shows even higher methyltransferase activity on p53/TP53. Monomethylates 'Lys-370' of p53/TP53, leading to decreased DNA-binding activity and subsequent transcriptional regulation activity of p53/TP53. Monomethylates RB1 at 'Lys-860'. This is N-lysine methyltransferase SMYD2 (SMYD2) from Homo sapiens (Human).